Here is a 315-residue protein sequence, read N- to C-terminus: Ribosomal RNA small subunit methyltransferase H (315 aa).

S-adenosyl-L-methionine contacts are provided by residues 35-37 (AGH), Asp55, Phe84, Asp105, and Gln112.

It belongs to the methyltransferase superfamily. RsmH family.

The protein localises to the cytoplasm. The enzyme catalyses cytidine(1402) in 16S rRNA + S-adenosyl-L-methionine = N(4)-methylcytidine(1402) in 16S rRNA + S-adenosyl-L-homocysteine + H(+). In terms of biological role, specifically methylates the N4 position of cytidine in position 1402 (C1402) of 16S rRNA. The protein is Ribosomal RNA small subunit methyltransferase H of Streptococcus agalactiae serotype III (strain NEM316).